Consider the following 780-residue polypeptide: Aconitate hydratase, mitochondrial (780 aa).

The transit peptide at 1-27 (MAPYSLLVSRLQKALGARQYHVASVLC) directs the protein to the mitochondrion. K31 bears the N6-succinyllysine mark. K50 carries the post-translational modification N6-acetyllysine; alternate. K50 is subject to N6-succinyllysine; alternate. Position 99 (Q99) interacts with substrate. N6-acetyllysine; alternate is present on residues K138 and K144. Residues K138 and K144 each carry the N6-succinyllysine; alternate modification. 192–194 (DSH) contacts substrate. K233 is subject to N6-acetyllysine; alternate. An N6-succinyllysine; alternate modification is found at K233. C385 contributes to the [4Fe-4S] cluster binding site. N6-succinyllysine is present on K411. [4Fe-4S] cluster is bound by residues C448 and C451. Residues R474 and R479 each contribute to the substrate site. An N6-acetyllysine; alternate mark is found at K517 and K523. 2 positions are modified to N6-succinyllysine; alternate: K517 and K523. Residues 524 to 537 (LEAPDADELPRAEF) show a composition bias toward basic and acidic residues. The tract at residues 524–560 (LEAPDADELPRAEFDPGQDTYQHPPKDSSGQQVDVSP) is disordered. K549 carries the N6-succinyllysine modification. Over residues 551-560 (SSGQQVDVSP) the composition is skewed to polar residues. A Phosphoserine modification is found at S559. N6-acetyllysine; alternate is present on K573. K573 carries the post-translational modification N6-succinyllysine; alternate. K591 bears the N6-succinyllysine mark. K605 is modified (N6-acetyllysine; alternate). K605 is modified (N6-succinyllysine; alternate). Position 607 (R607) interacts with substrate. K628 is modified (N6-succinyllysine). S670 is modified (phosphoserine). 670–671 (SR) is a substrate binding site. K689 bears the N6-succinyllysine mark. Residues K723 and K730 each carry the N6-acetyllysine; alternate modification. N6-succinyllysine; alternate occurs at positions 723 and 730. N6-acetyllysine is present on residues K736 and K743.

The protein belongs to the aconitase/IPM isomerase family. In terms of assembly, monomer. [4Fe-4S] cluster is required as a cofactor. Forms covalent cross-links mediated by transglutaminase TGM2, between a glutamine and the epsilon-amino group of a lysine residue, forming homopolymers and heteropolymers.

It localises to the mitochondrion. It catalyses the reaction citrate = D-threo-isocitrate. It participates in carbohydrate metabolism; tricarboxylic acid cycle; isocitrate from oxaloacetate: step 2/2. Functionally, catalyzes the isomerization of citrate to isocitrate via cis-aconitate. The protein is Aconitate hydratase, mitochondrial (ACO2) of Bos taurus (Bovine).